Consider the following 802-residue polypeptide: Phenylalanine--tRNA ligase beta subunit (802 aa).

The 110-residue stretch at 40–149 folds into the tRNA-binding domain; the sequence is RPELDFVKIV…EGAEIGKTIR (110 aa). A B5 domain is found at 407–484; it reads HKEVRIHTDI…RTRGYDTIQV (78 aa). Residues aspartate 462, aspartate 468, glutamate 471, and glutamate 472 each coordinate Mg(2+). One can recognise an FDX-ACB domain in the interval 710–802; the sequence is SQFPEAEIDI…LAGKNGFVLR (93 aa).

This sequence belongs to the phenylalanyl-tRNA synthetase beta subunit family. Type 1 subfamily. As to quaternary structure, tetramer of two alpha and two beta subunits. Requires Mg(2+) as cofactor.

The protein localises to the cytoplasm. The enzyme catalyses tRNA(Phe) + L-phenylalanine + ATP = L-phenylalanyl-tRNA(Phe) + AMP + diphosphate + H(+). The sequence is that of Phenylalanine--tRNA ligase beta subunit from Leptospira borgpetersenii serovar Hardjo-bovis (strain L550).